Here is a 396-residue protein sequence, read N- to C-terminus: MAKAKFERTKPHVNIGTIGHVDHGKTTLTAAITRVLAERGQAEFKGFDQIDNAPEERERGITIATSHVEYETEKRHYAHVDCPGHADYVKNMITGAAQMDGAILVVSAADGPMPQTREHILLARQVGVPYIVVFLNKADMVDDEELLELVELEIRELLSSYDFPGDDIPIIKGSALKALNGDKDELGSEAIVKLMDAVDAYIPEPERAIDKPFLMPVEDVFSISGRGTVATGRVERGVVKVGEEVEIVGIKTTTKTTVTGVEMFRKLLDEGRAGDNIGALLRGVKREDIERGQVLARPGSITPHTKFKAEAYILTKEEGGRHTPFFNGYRPQFYFRTTDVTGIVDLPAGTEMVMPGDNVAVTVNLITPIAMDEGLRFAIREGGRTVGAGVVSSIIE.

One can recognise a tr-type G domain in the interval 10 to 206; sequence KPHVNIGTIG…AVDAYIPEPE (197 aa). Residues 19-26 are G1; that stretch reads GHVDHGKT. 19-26 lines the GTP pocket; sequence GHVDHGKT. Residue Thr26 coordinates Mg(2+). The tract at residues 60 to 64 is G2; it reads GITIA. The interval 81–84 is G3; sequence DCPG. Residues 81–85 and 136–139 each bind GTP; these read DCPGH and NKAD. The segment at 136-139 is G4; the sequence is NKAD. The G5 stretch occupies residues 174-176; sequence SAL.

Belongs to the TRAFAC class translation factor GTPase superfamily. Classic translation factor GTPase family. EF-Tu/EF-1A subfamily. In terms of assembly, monomer.

Its subcellular location is the cytoplasm. It catalyses the reaction GTP + H2O = GDP + phosphate + H(+). In terms of biological role, GTP hydrolase that promotes the GTP-dependent binding of aminoacyl-tRNA to the A-site of ribosomes during protein biosynthesis. The sequence is that of Elongation factor Tu from Geobacter metallireducens (strain ATCC 53774 / DSM 7210 / GS-15).